The following is a 418-amino-acid chain: D-amino acid dehydrogenase 1 (418 aa).

3-17 (IMVLGGGVIGVTTAY) contacts FAD.

This sequence belongs to the DadA oxidoreductase family. The cofactor is FAD.

The catalysed reaction is a D-alpha-amino acid + A + H2O = a 2-oxocarboxylate + AH2 + NH4(+). The protein operates within amino-acid degradation; D-alanine degradation; NH(3) and pyruvate from D-alanine: step 1/1. In terms of biological role, oxidative deamination of D-amino acids. The protein is D-amino acid dehydrogenase 1 (dadA1) of Mesorhizobium japonicum (strain LMG 29417 / CECT 9101 / MAFF 303099) (Mesorhizobium loti (strain MAFF 303099)).